A 294-amino-acid chain; its full sequence is Probable HTH-type transcriptional regulator LrrA (294 aa).

One can recognise an HTH lysR-type domain in the interval 1-58 (MNITQLQILAAVVETGNFSAAALQLDLSQSAVSRAIAALEDELGVVLLSRGRFGARPT). Residues 18–37 (FSAAALQLDLSQSAVSRAIA) constitute a DNA-binding region (H-T-H motif).

Belongs to the LysR transcriptional regulatory family.

This Synechococcus elongatus (strain ATCC 33912 / PCC 7942 / FACHB-805) (Anacystis nidulans R2) protein is Probable HTH-type transcriptional regulator LrrA (lrrA).